A 228-amino-acid chain; its full sequence is Mitochondrial assembly of ribosomal large subunit protein 1 (228 aa).

The segment at 53–77 (SLTRGLHHGPQPEERTAGDARLQPG) is disordered.

This sequence belongs to the Iojap/RsfS family. Associates with the mitochondrial ribosome large subunit (39S) via interaction with MRPL12 and/or MRPL14. The interaction generates steric hindrance that is expected to prevent premature association of the 28S and 39S ribosomal subunits. Identified in a complex composed of MALSU1, MIEF1 upstream open reading frame protein and NDUFAB1; within the trimeric complex, MIEF1 upstream open reading frame protein functions as a bridging scaffold that interacts with MALSU1 on one side, and with NDUFAB1 on the other side. Interacts with MRPL12 and MRPL14.

The protein resides in the mitochondrion matrix. Required for normal mitochondrial ribosome function and mitochondrial translation. May play a role in ribosome biogenesis by preventing premature association of the 28S and 39S ribosomal subunits. Interacts with mitochondrial ribosomal protein uL14m (MRPL14), probably blocking formation of intersubunit bridge B8, preventing association of the 28S and 39S ribosomal subunits. Addition to isolated mitochondrial ribosomal subunits partially inhibits translation, probably by interfering with the association of the 28S and 39S ribosomal subunits and the formation of functional ribosomes. May also participate in the assembly and/or regulation of the stability of the large subunit of the mitochondrial ribosome. May function as a ribosomal silencing factor. This Mus musculus (Mouse) protein is Mitochondrial assembly of ribosomal large subunit protein 1 (Malsu1).